The primary structure comprises 839 residues: NT-3 growth factor receptor (839 aa).

A signal peptide spans 1–31 (MDVSLCPAKCSFWRIFLLGSVWLDYVGSVLA). 2 disulfide bridges follow: Cys32–Cys38 and Cys36–Cys45. Topologically, residues 32-429 (CPANCVCSKT…TVTHKPEEDT (398 aa)) are extracellular. Asn72 and Asn79 each carry an N-linked (GlcNAc...) asparagine glycan. LRR repeat units follow at residues 104–125 (GLQK…AFAK) and 128–149 (HLRY…LFQT). N-linked (GlcNAc...) asparagine glycans are attached at residues Asn133 and Asn163. Positions 160-209 (NFFNCSCDIRWMQLWQEQGEAKLNSQNLYCINADGSQLPLFRMNISQCDL) constitute an LRRCT domain. Cystine bridges form between Cys164/Cys189 and Cys166/Cys207. Asn203, Asn218, Asn232, Asn259, Asn267, Asn272, and Asn294 each carry an N-linked (GlcNAc...) asparagine glycan. Ig-like C2-type domains lie at 210 to 300 (PEIS…VALT) and 309 to 382 (SLEE…IAKN). A disulfide bridge connects residues Cys231 and Cys284. Cys320 and Cys362 are joined by a disulfide. Residues Asn375 and Asn388 are each glycosylated (N-linked (GlcNAc...) asparagine). The helical transmembrane segment at 430–453 (FGVSIAVGLAAFACVLLVVLFVMI) threads the bilayer. At 454 to 839 (NKYGRRSKFG…ATPIYLDILG (386 aa)) the chain is on the cytoplasmic side. Residue Ser493 is modified to Phosphoserine. Tyr516 is modified (phosphotyrosine; by autocatalysis). Residues 538–839 (IVLKRELGEG…ATPIYLDILG (302 aa)) form the Protein kinase domain. ATP is bound by residues 544 to 552 (LGEGAFGKV) and Lys572. Asp679 acts as the Proton acceptor in catalysis. Phosphotyrosine; by autocatalysis occurs at positions 705, 709, and 710.

This sequence belongs to the protein kinase superfamily. Tyr protein kinase family. Insulin receptor subfamily. Exists in a dynamic equilibrium between monomeric (low affinity) and dimeric (high affinity) structures. Binds SH2B2. Interacts with SQSTM1 and KIDINS220. Interacts with PTPRS. Interacts with MAPK8IP3/JIP3. Ligand-mediated auto-phosphorylation. In terms of tissue distribution, widely expressed but mainly in nervous tissue. Isoform 2 is expressed at higher levels in adult brain than in fetal brain.

It is found in the membrane. The catalysed reaction is L-tyrosyl-[protein] + ATP = O-phospho-L-tyrosyl-[protein] + ADP + H(+). Functionally, receptor tyrosine kinase involved in nervous system and probably heart development. Upon binding of its ligand NTF3/neurotrophin-3, NTRK3 autophosphorylates and activates different signaling pathways, including the phosphatidylinositol 3-kinase/AKT and the MAPK pathways, that control cell survival and differentiation. This Homo sapiens (Human) protein is NT-3 growth factor receptor (NTRK3).